A 399-amino-acid chain; its full sequence is Endo-1,4-beta-xylanase C (399 aa).

An N-terminal signal peptide occupies residues 1-20 (MFKFSASLAALAALVPFVAA). Residues 21–56 (QSPEWGQCGGIGWTGPTTCVAGTTCVESNPYYSQCL) form the CBM1 domain. In terms of domain architecture, GH10 spans 81–396 (SAKLHTLAKA…KPAFNGIAAG (316 aa)). The active-site Proton donor is E212. E318 (nucleophile) is an active-site residue. C346 and C352 form a disulfide bridge.

This sequence belongs to the glycosyl hydrolase 10 (cellulase F) family.

It is found in the secreted. The catalysed reaction is Endohydrolysis of (1-&gt;4)-beta-D-xylosidic linkages in xylans.. The protein operates within glycan degradation; xylan degradation. Its function is as follows. Endo-1,4-beta-xylanase involved in the hydrolysis of xylan, a major structural heterogeneous polysaccharide found in plant biomass representing the second most abundant polysaccharide in the biosphere, after cellulose. In Phanerodontia chrysosporium (White-rot fungus), this protein is Endo-1,4-beta-xylanase C (xynC).